The chain runs to 321 residues: Fe-S cluster assembly protein DRE2 (321 aa).

The tract at residues M1–R161 is N-terminal SAM-like domain. Residues P123–N168 form a disordered region. A compositionally biased stretch (low complexity) spans P139–T156. The linker stretch occupies residues P162–D197. Residues C203, C219, C222, and C224 each coordinate [2Fe-2S] cluster. The fe-S binding site A stretch occupies residues C203–C224. The [4Fe-4S] cluster site is built by C285, C288, C296, and C299. 2 consecutive short sequence motifs (cx2C motif) follow at residues C285–C288 and C296–C299. Positions C285–C299 are fe-S binding site B.

It belongs to the anamorsin family. In terms of assembly, monomer. Interacts with TAH18. Interacts with MIA40. [2Fe-2S] cluster is required as a cofactor. [4Fe-4S] cluster serves as cofactor.

The protein localises to the cytoplasm. It localises to the mitochondrion intermembrane space. In terms of biological role, component of the cytosolic iron-sulfur (Fe-S) protein assembly (CIA) machinery required for the maturation of extramitochondrial Fe-S proteins. Part of an electron transfer chain functioning in an early step of cytosolic Fe-S biogenesis, facilitating the de novo assembly of a [4Fe-4S] cluster on the scaffold complex CFD1-NBP35. Electrons are transferred to DRE2 from NADPH via the FAD- and FMN-containing protein TAH18. TAH18-DRE2 are also required for the assembly of the diferric tyrosyl radical cofactor of ribonucleotide reductase (RNR), probably by providing electrons for reduction during radical cofactor maturation in the catalytic small subunit RNR2. This Cryptococcus neoformans var. neoformans serotype D (strain B-3501A) (Filobasidiella neoformans) protein is Fe-S cluster assembly protein DRE2.